Consider the following 131-residue polypeptide: C-type natriuretic peptide (131 aa).

A signal peptide spans 1–20 (MMCKALVFAVLLLAVPLERA). A propeptide spanning residues 21 to 109 (DSRALRTPVD…KRALPDRAKR (89 aa)) is cleaved from the precursor. Cysteines 115 and 131 form a disulfide.

Belongs to the natriuretic peptide family. As to expression, highly expressed in brain and liver, and moderately in gut, gills and heart. Expressed to a low level in atrium, ventricle and liver of fresh water eels.

It localises to the secreted. Functionally, hormone which plays a role in endochondral ossification through regulation of cartilaginous growth plate chondrocytes proliferation and differentiation. May also be vasoactive and natriuretic. May be important for freshwater adaptation. The polypeptide is C-type natriuretic peptide (cnp) (Anguilla japonica (Japanese eel)).